A 444-amino-acid chain; its full sequence is Tubulin gamma chain (444 aa).

Serine 144–glycine 150 lines the GTP pocket.

This sequence belongs to the tubulin family.

The protein resides in the cytoplasm. The protein localises to the cytoskeleton. Its subcellular location is the microtubule organizing center. It is found in the centrosome. It localises to the cell junction. The protein resides in the hemidesmosome. The protein localises to the adherens junction. Tubulin is the major constituent of microtubules. The gamma chain is found at microtubule organizing centers (MTOC) such as the spindle poles or the centrosome, suggesting that it is involved in the minus-end nucleation of microtubule assembly. This chain is Tubulin gamma chain (tbg-1), found in Caenorhabditis elegans.